Reading from the N-terminus, the 99-residue chain is Aspartyl/glutamyl-tRNA(Asn/Gln) amidotransferase subunit C (99 aa).

It belongs to the GatC family. In terms of assembly, heterotrimer of A, B and C subunits.

The catalysed reaction is L-glutamyl-tRNA(Gln) + L-glutamine + ATP + H2O = L-glutaminyl-tRNA(Gln) + L-glutamate + ADP + phosphate + H(+). The enzyme catalyses L-aspartyl-tRNA(Asn) + L-glutamine + ATP + H2O = L-asparaginyl-tRNA(Asn) + L-glutamate + ADP + phosphate + 2 H(+). Functionally, allows the formation of correctly charged Asn-tRNA(Asn) or Gln-tRNA(Gln) through the transamidation of misacylated Asp-tRNA(Asn) or Glu-tRNA(Gln) in organisms which lack either or both of asparaginyl-tRNA or glutaminyl-tRNA synthetases. The reaction takes place in the presence of glutamine and ATP through an activated phospho-Asp-tRNA(Asn) or phospho-Glu-tRNA(Gln). In Solibacter usitatus (strain Ellin6076), this protein is Aspartyl/glutamyl-tRNA(Asn/Gln) amidotransferase subunit C.